Here is a 382-residue protein sequence, read N- to C-terminus: MNNNSRNNENRSTINRNKRQLQQAKEKNENIHIPRYIRNQPWYYKDTPKEQEGKKPGNDDTSTAEGGEKSDYLVHHRQKAKGGALDIDNNSEPKIGMGIKDEFKLIRPQKMSVRDSHSLSFCRNCGEAGHKEKDCMEKPRKMQKLVPDLNSQKNNGTVLVRATDDDWDSRKDRWYGYSGKEYNELISKWERDKRNKIKGKDKSQTDETLWDTDEEIELMKLELYKDSVGSLKKDDADNSQLYRTSTRLREDKAAYLNDINSTESNYDPKSRLYKTETLGAVDEKSKMFRRHLTGEGLKLNELNQFARSHAKEMGIRDEIEDKEKVQHVLVANPTKYEYLKKKREQEETKQPKIVSIGDLEARKVDGTKQSEEQRNHLKDLYG.

Low complexity predominate over residues 1 to 15 (MNNNSRNNENRSTIN). A disordered region spans residues 1–72 (MNNNSRNNEN…TAEGGEKSDY (72 aa)). The segment covering 46–58 (DTPKEQEGKKPGN) has biased composition (basic and acidic residues). S120 is modified (phosphoserine). The CCHC-type zinc finger occupies 120–137 (SFCRNCGEAGHKEKDCME). Positions 200 to 224 (KDKSQTDETLWDTDEEIELMKLELY) are interaction with PRP8. Phosphothreonine is present on T212. The segment at 362–382 (RKVDGTKQSEEQRNHLKDLYG) is disordered.

This sequence belongs to the SLU7 family. In terms of assembly, belongs to the CWC complex (or CEF1-associated complex), a spliceosome sub-complex reminiscent of a late-stage spliceosome composed of the U2, U5 and U6 snRNAs and at least BUD13, BUD31, BRR2, CDC40, CEF1, CLF1, CUS1, CWC2, CWC15, CWC21, CWC22, CWC23, CWC24, CWC25, CWC27, ECM2, HSH155, IST3, ISY1, LEA1, MSL1, NTC20, PRP8, PRP9, PRP11, PRP19, PRP21, PRP22, PRP45, PRP46, SLU7, SMB1, SMD1, SMD2, SMD3, SMX2, SMX3, SNT309, SNU114, SPP2, SYF1, SYF2, RSE1 and YJU2. Interacts with BRR2, ECM2, PRP18 and PRP22. Post-translationally, N-glycosylated.

It is found in the nucleus. In terms of biological role, essential protein involved in the second catalytic step of pre-mRNA splicing. Involved in the selection of 3'-type splice sites; this selection could be done via a 3'-splice site-binding factor, PRP16. In Saccharomyces cerevisiae (strain ATCC 204508 / S288c) (Baker's yeast), this protein is Pre-mRNA-splicing factor SLU7 (SLU7).